The sequence spans 216 residues: Pyrophosphatase PpaX (216 aa).

The active-site Nucleophile is the Asp-9.

Belongs to the HAD-like hydrolase superfamily. PpaX family. Mg(2+) serves as cofactor.

The catalysed reaction is diphosphate + H2O = 2 phosphate + H(+). Functionally, hydrolyzes pyrophosphate formed during P-Ser-HPr dephosphorylation by HPrK/P. Might play a role in controlling the intracellular pyrophosphate pool. The protein is Pyrophosphatase PpaX of Bacillus cereus (strain AH820).